Consider the following 257-residue polypeptide: Type III pantothenate kinase (257 aa).

Residue 5–12 (DIGNTNIK) participates in ATP binding. 107–110 (GSDR) is a binding site for substrate. Asp109 serves as the catalytic Proton acceptor. Residue Thr133 participates in ATP binding.

It belongs to the type III pantothenate kinase family. In terms of assembly, homodimer. It depends on NH4(+) as a cofactor. K(+) serves as cofactor.

Its subcellular location is the cytoplasm. The enzyme catalyses (R)-pantothenate + ATP = (R)-4'-phosphopantothenate + ADP + H(+). The protein operates within cofactor biosynthesis; coenzyme A biosynthesis; CoA from (R)-pantothenate: step 1/5. Functionally, catalyzes the phosphorylation of pantothenate (Pan), the first step in CoA biosynthesis. This chain is Type III pantothenate kinase, found in Ehrlichia ruminantium (strain Gardel).